A 320-amino-acid chain; its full sequence is Aspartate carbamoyltransferase catalytic subunit (320 aa).

2 residues coordinate carbamoyl phosphate: arginine 68 and threonine 69. Lysine 96 lines the L-aspartate pocket. Arginine 118, histidine 148, and glutamine 151 together coordinate carbamoyl phosphate. L-aspartate contacts are provided by arginine 181 and arginine 236. Glycine 277 and proline 278 together coordinate carbamoyl phosphate.

It belongs to the aspartate/ornithine carbamoyltransferase superfamily. ATCase family. As to quaternary structure, heterododecamer (2C3:3R2) of six catalytic PyrB chains organized as two trimers (C3), and six regulatory PyrI chains organized as three dimers (R2).

The enzyme catalyses carbamoyl phosphate + L-aspartate = N-carbamoyl-L-aspartate + phosphate + H(+). Its pathway is pyrimidine metabolism; UMP biosynthesis via de novo pathway; (S)-dihydroorotate from bicarbonate: step 2/3. Its function is as follows. Catalyzes the condensation of carbamoyl phosphate and aspartate to form carbamoyl aspartate and inorganic phosphate, the committed step in the de novo pyrimidine nucleotide biosynthesis pathway. In Polaromonas sp. (strain JS666 / ATCC BAA-500), this protein is Aspartate carbamoyltransferase catalytic subunit.